A 509-amino-acid polypeptide reads, in one-letter code: Methionine--tRNA ligase (509 aa).

A 'HIGH' region motif is present at residues 12 to 22 (YYVNDVPHIGH). A 'KMSKS' region motif is present at residues 295 to 299 (KISKS). Position 298 (Lys298) interacts with ATP.

This sequence belongs to the class-I aminoacyl-tRNA synthetase family. MetG type 2B subfamily. Monomer.

The protein resides in the cytoplasm. The enzyme catalyses tRNA(Met) + L-methionine + ATP = L-methionyl-tRNA(Met) + AMP + diphosphate. In terms of biological role, is required not only for elongation of protein synthesis but also for the initiation of all mRNA translation through initiator tRNA(fMet) aminoacylation. In Rickettsia bellii (strain RML369-C), this protein is Methionine--tRNA ligase.